The sequence spans 312 residues: MNWTELSIIINHEAVELATNILENHGSNGVVIEDSDDLINQPEDKYGEIYALKKEDYPDKGVRLKAYFNELTYDDKLRQRIKDELLNLDELDQHNVQFSEKIIAETDWENEWKNYFHPFRASKKFTIVPSWETYAKEADEELCIELDPGMAFGTGDHPTTSMCLKAIETYVLPQHSVIDVGTGSGILSIASHLIGVKRIKALDIDEMAVSVAKENFRRNHCETLIEAVPGNLLKDETEKFDIVIANILAHIIDEMIEDAYNTLNEGGYFITSGIIKEKYEGIQSHMERVGFKIISEQHDNGWVCLVGQKVSE.

S-adenosyl-L-methionine is bound by residues threonine 160, glycine 181, aspartate 203, and asparagine 246.

It belongs to the methyltransferase superfamily. PrmA family.

The protein resides in the cytoplasm. The catalysed reaction is L-lysyl-[protein] + 3 S-adenosyl-L-methionine = N(6),N(6),N(6)-trimethyl-L-lysyl-[protein] + 3 S-adenosyl-L-homocysteine + 3 H(+). Methylates ribosomal protein L11. The protein is Ribosomal protein L11 methyltransferase of Staphylococcus aureus (strain bovine RF122 / ET3-1).